The sequence spans 463 residues: MSTGTVVQVIGAVVDVEFPQDAVPQIYDALKITGEGACKGLVLEVQQQLGGGVVRTIAMGSSDGLRRGLEVVNTGSPISVPVGVATLGRIMNVLGEPIDECGEIGEEERYVIHRSAPSYEDQSSSTELLETGIKVIDLVCPFAKGGKVGLFGGAGVGKTVNMMELINNIAKAHSGLSVFAGVGERTREGNDFYYEMKDSGVLDKVAMVYGQMNEPPGNRLRVALSGLTMAEKFRDEGRDVLLFVDNIYRYTLAGTEVSALLGRMPSAVGYQPTLAEEMGVLQERITSTKSGSITSVQAVYVPADDLTDPSPATTFAHLDATVVLSRQIASLGIYPAVDPLDSTSRQLDPQVVGQEHYDVANGVQTVLQRYKELKDIIAILGMDELSDEDKTAVARARKIERFLSQPFHVAEVFTGSPGKYVSLKDTIRGFKGLLEGEFDHIPEQAFYMVGTIDEAVEKANKKK.

152 to 159 (GGAGVGKT) is an ATP binding site.

It belongs to the ATPase alpha/beta chains family. As to quaternary structure, F-type ATPases have 2 components, CF(1) - the catalytic core - and CF(0) - the membrane proton channel. CF(1) has five subunits: alpha(3), beta(3), gamma(1), delta(1), epsilon(1). CF(0) has three main subunits: a(1), b(2) and c(9-12). The alpha and beta chains form an alternating ring which encloses part of the gamma chain. CF(1) is attached to CF(0) by a central stalk formed by the gamma and epsilon chains, while a peripheral stalk is formed by the delta and b chains.

Its subcellular location is the cell inner membrane. The catalysed reaction is ATP + H2O + 4 H(+)(in) = ADP + phosphate + 5 H(+)(out). Its function is as follows. Produces ATP from ADP in the presence of a proton gradient across the membrane. The catalytic sites are hosted primarily by the beta subunits. The sequence is that of ATP synthase subunit beta from Shewanella denitrificans (strain OS217 / ATCC BAA-1090 / DSM 15013).